The following is a 20-amino-acid chain: Brevinin-1ITb (20 aa).

M8 carries the methionine sulfoxide; partial modification. C14 and C20 form a disulfide bridge.

It belongs to the frog skin active peptide (FSAP) family. Brevinin subfamily. In terms of tissue distribution, expressed by the skin glands.

The protein localises to the secreted. Functionally, antimicrobial peptide. This is Brevinin-1ITb from Rana italica (Italian stream frog).